Consider the following 371-residue polypeptide: D-alanine--D-alanine ligase (371 aa).

The region spanning lysine 154 to aspartate 361 is the ATP-grasp domain. An ATP-binding site is contributed by arginine 182 to glutamate 237. 3 residues coordinate Mg(2+): aspartate 316, glutamate 328, and asparagine 330.

It belongs to the D-alanine--D-alanine ligase family. Mg(2+) is required as a cofactor. Mn(2+) serves as cofactor.

It localises to the cytoplasm. It carries out the reaction 2 D-alanine + ATP = D-alanyl-D-alanine + ADP + phosphate + H(+). Its pathway is cell wall biogenesis; peptidoglycan biosynthesis. Cell wall formation. This is D-alanine--D-alanine ligase from Mycobacterium sp. (strain JLS).